The primary structure comprises 407 residues: Aurora kinase (407 aa).

2 disordered regions span residues 1 to 43 (MTPT…STSS) and 66 to 137 (ERQG…TQSK). 2 stretches are compositionally biased toward low complexity: residues 31-43 (SASTTSTTASTSS) and 126-136 (STTTTMTSTQS). In terms of domain architecture, Protein kinase spans 147-399 (FDIGRPLGKG…LEGVIAHAWI (253 aa)). ATP contacts are provided by residues Lys157, Lys176, and 224–227 (LEYA). Residue Asp272 is the Proton acceptor of the active site. ATP is bound at residue Asp290.

Belongs to the protein kinase superfamily. Ser/Thr protein kinase family.

It is found in the cytoplasm. It localises to the cytoskeleton. Its subcellular location is the spindle. The protein resides in the midbody. The protein localises to the microtubule organizing center. It is found in the centrosome. It localises to the nucleus. Its subcellular location is the chromosome. The protein resides in the centromere. It carries out the reaction L-seryl-[protein] + ATP = O-phospho-L-seryl-[protein] + ADP + H(+). The catalysed reaction is L-threonyl-[protein] + ATP = O-phospho-L-threonyl-[protein] + ADP + H(+). With respect to regulation, cdc2 activity is required for activation. Functionally, serine/threonine protein kinase that contributes to the regulation of cell cycle progression. Involved in meiotic apparatus formation and polar body extrusion. Contributes to Plk1 activation and phosphorylation of histone H3 at 'Ser-10' during meiosis I. Required for accurate progression of early embryonic M phase. Involved in chromosome alignment and cleavage furrow formation during early embryonic cycles. May be involved in mitotic spindle formation and cytokinesis. This chain is Aurora kinase, found in Patiria pectinifera (Starfish).